A 490-amino-acid chain; its full sequence is UDP-N-acetylmuramoylalanine--D-glutamate ligase (490 aa).

Position 124–130 (124–130 (GTNGKTT)) interacts with ATP.

This sequence belongs to the MurCDEF family.

It is found in the cytoplasm. It carries out the reaction UDP-N-acetyl-alpha-D-muramoyl-L-alanine + D-glutamate + ATP = UDP-N-acetyl-alpha-D-muramoyl-L-alanyl-D-glutamate + ADP + phosphate + H(+). Its pathway is cell wall biogenesis; peptidoglycan biosynthesis. Cell wall formation. Catalyzes the addition of glutamate to the nucleotide precursor UDP-N-acetylmuramoyl-L-alanine (UMA). This is UDP-N-acetylmuramoylalanine--D-glutamate ligase (murD) from Mycobacterium leprae (strain TN).